The primary structure comprises 284 residues: GTP cyclohydrolase MptA (284 aa).

It belongs to the GTP cyclohydrolase IV family. In terms of assembly, homodimer. The cofactor is Fe(2+).

It carries out the reaction GTP + H2O = 7,8-dihydroneopterin 2',3'-cyclic phosphate + formate + diphosphate + H(+). It functions in the pathway cofactor biosynthesis; 5,6,7,8-tetrahydromethanopterin biosynthesis. Its function is as follows. Converts GTP to 7,8-dihydro-D-neopterin 2',3'-cyclic phosphate, the first intermediate in the biosynthesis of coenzyme methanopterin. This Thermoplasma volcanium (strain ATCC 51530 / DSM 4299 / JCM 9571 / NBRC 15438 / GSS1) protein is GTP cyclohydrolase MptA.